The sequence spans 265 residues: 3-methyl-2-oxobutanoate hydroxymethyltransferase (265 aa).

Residues Asp45 and Asp84 each coordinate Mg(2+). 3-methyl-2-oxobutanoate-binding positions include 45-46 (DS), Asp84, and Lys112. Glu114 lines the Mg(2+) pocket. Glu181 acts as the Proton acceptor in catalysis.

Belongs to the PanB family. As to quaternary structure, homodecamer; pentamer of dimers. It depends on Mg(2+) as a cofactor.

The protein localises to the cytoplasm. The catalysed reaction is 3-methyl-2-oxobutanoate + (6R)-5,10-methylene-5,6,7,8-tetrahydrofolate + H2O = 2-dehydropantoate + (6S)-5,6,7,8-tetrahydrofolate. It participates in cofactor biosynthesis; (R)-pantothenate biosynthesis; (R)-pantoate from 3-methyl-2-oxobutanoate: step 1/2. Catalyzes the reversible reaction in which hydroxymethyl group from 5,10-methylenetetrahydrofolate is transferred onto alpha-ketoisovalerate to form ketopantoate. This Yersinia pseudotuberculosis serotype IB (strain PB1/+) protein is 3-methyl-2-oxobutanoate hydroxymethyltransferase.